We begin with the raw amino-acid sequence, 40 residues long: Large ribosomal subunit protein bL36A (40 aa).

This sequence belongs to the bacterial ribosomal protein bL36 family.

The chain is Large ribosomal subunit protein bL36A from Kineococcus radiotolerans (strain ATCC BAA-149 / DSM 14245 / SRS30216).